The following is a 189-amino-acid chain: MEYKRPFGVKIDLETGVIPGAKRIVRKLSDMRGYFVDEEAYEKLLREDPVVYEVYAIEQEEREGDLNFATTVLYPGKVGKEFFFTKGHYHAKADRAEIYYALKGKGGMLLQTPEGEAEWIPMEPGTVVYVPPYWAHRTVNTGGEPFVFLAIYPADAGHDYGSIKEKGFSKIVIDEGGEVKIVDNPRWSV.

Fe cation-binding residues include H88, H90, E97, and H136.

This sequence belongs to the archaeal-type GPI family. As to quaternary structure, homodimer.

The protein localises to the cytoplasm. It catalyses the reaction alpha-D-glucose 6-phosphate = beta-D-fructose 6-phosphate. Its pathway is carbohydrate degradation; glycolysis; D-glyceraldehyde 3-phosphate and glycerone phosphate from D-glucose: step 2/4. The sequence is that of Glucose-6-phosphate isomerase from Thermococcus gammatolerans (strain DSM 15229 / JCM 11827 / EJ3).